A 474-amino-acid chain; its full sequence is PRAME family member 7 (474 aa).

One copy of the LRR 1; degenerate repeat lies at glutamine 97–serine 122. One copy of the LRR 2; degenerate repeat lies at histidine 177–glutamate 201. An LRR 3; degenerate repeat occupies leucine 202–glutamine 228. One copy of the LRR 4; degenerate repeat lies at methionine 229 to lysine 264. LRR repeat units follow at residues leucine 265–leucine 290, glutamine 291–lysine 322, glutamate 323–glycine 341, valine 347–arginine 374, and cysteine 375–histidine 399.

It belongs to the PRAME family.

This is PRAME family member 7 from Homo sapiens (Human).